A 565-amino-acid polypeptide reads, in one-letter code: MQAFVQFLGSNPYILLFLTIGLAVWVGKFSIKGYGLGAVAAAIVVGCLVATVGAAYGVKFHLDEFAKSLLYYLFMYGVGLRVGPSFVNALNKESINYAILAIIAPILGLAIVVLGTQFFGLPLGAAGGMLAGSQTMSAAIGSAEQAVSAGVLSLGSESPEQISAMIALSYGITYIWGTVGIILLCKYLPRIWGVDAKAAALEFEKAHGVPNVDDAGLTAFHPFDLRAYRVENPESIGKTVQQFRTRFPQYQVVNVERGDQLLGPSAETVLQQGDVVALGGRLEEMTANMGVLGPEVPDARALNIPLDQAEILVTNKEVTGRPLKTFRGSELAGQIQLQRVERSGVPLPIGLETTLQKRDVLFVTGLQPAVSKAGEIFGVIARHSSATDLLTLSFGMILGFLIGLIEVPAFGAKVGLGNAGGLLLSGIIVSSISSRLRFFGNTPNAARNILEDLGLIGFVAIVGINAGADLLTQLTGAIALKIFIVGFLASTIPPIIVWAIGFHIMKINPALLMGATAGARSHSGPAREAAKEVGSSVPWLGFPVGYAVSGVLLTVFGYFAMVLAH.

5 consecutive transmembrane segments (helical) span residues 4-26 (FVQF…AVWV), 33-55 (GYGL…VGAA), 68-90 (SLLY…VNAL), 97-119 (YAIL…TQFF), and 162-184 (ISAM…IILL). 2 RCK C-terminal domains span residues 210–295 (PNVD…LGPE) and 296–379 (VPDA…IFGV). 5 consecutive transmembrane segments (helical) span residues 389–411 (LLTL…PAFG), 415–432 (GLGN…VSSI), 453–472 (LGLI…DLLT), 482–504 (IFIV…GFHI), and 539–561 (WLGF…YFAM).

The protein belongs to the AAE transporter (TC 2.A.81) family.

The protein localises to the cell membrane. This is an uncharacterized protein from Bordetella bronchiseptica (strain ATCC BAA-588 / NCTC 13252 / RB50) (Alcaligenes bronchisepticus).